Reading from the N-terminus, the 248-residue chain is MDITLVGKKVIVTGGSRGIGLGIVKLFLENGADVEIWGLNEERGQAVIESLTGLGGEVSFARVDVSHNGGVKDCVQKFLDKHNKIDILVNNAGITRDNLLMRMSEDDWQSVISTNLTSLYYTCSSVIRHMIKARSGSIINVASIVAKIGSAGQTNYAAAKAGIIAFTKSLAKEVAARNIRVNCLAPGFIETDMTSVLNDNLKAEWLKSIPLGRAGTPEDVARVALFLASQLSSYMTAQTLVVDGGLTY.

NADP(+)-binding positions include 14 to 17, 64 to 65, and Asn91; these read GGSR and DV. Ser143 contributes to the substrate binding site. The active-site Proton acceptor is the Tyr156. NADP(+) contacts are provided by residues 156–160 and Ile189; that span reads YAAAK.

It belongs to the short-chain dehydrogenases/reductases (SDR) family. As to quaternary structure, homotetramer.

The catalysed reaction is a (3R)-hydroxyacyl-[ACP] + NADP(+) = a 3-oxoacyl-[ACP] + NADPH + H(+). It functions in the pathway lipid metabolism; fatty acid biosynthesis. Its function is as follows. Catalyzes the NADPH-dependent reduction of beta-ketoacyl-ACP substrates to beta-hydroxyacyl-ACP products, the first reductive step in the elongation cycle of fatty acid biosynthesis. This chain is 3-oxoacyl-[acyl-carrier-protein] reductase FabG (fabG), found in Chlamydia pneumoniae (Chlamydophila pneumoniae).